Reading from the N-terminus, the 355-residue chain is MNSTTKENKETIRPVFPFTAIVGQEEMKLALILNVIDPKIGGVMIMGDRGTGKSTTIRAIADLLPKIEVVKDDLFNSHPMDVDLMSDENKKTLQDGVALTTSYINVPMVDLPLGATEDRVCGTIDIEKALTEGIKTFEPGLLAKANRGILYVDEVNLLDDHLVDILLDSAASGWNTVEREGISVRHPARFVLVGSGNPEEGELRPQLLDRFGMHAEIRTVKDPELRVKIVEQRTNFDQNPRRCIEDCQKTQNDLKEKIAEAQLLLSNITIDYDLRIKISQVCGELDVDGLRGDIVTNRAAKAYAAFNGQQNVKSSDIGKVITLCLRHRLRKDPLEAMDSGEKVQKVFNKIFEEEN.

Gly-47 to Ser-54 contacts ATP.

Belongs to the Mg-chelatase subunits D/I family.

It is found in the plastid. Its subcellular location is the chloroplast. The catalysed reaction is protoporphyrin IX + Mg(2+) + ATP + H2O = Mg-protoporphyrin IX + ADP + phosphate + 3 H(+). Its pathway is porphyrin-containing compound metabolism; chlorophyll biosynthesis. Its function is as follows. Involved in chlorophyll biosynthesis; introduces a magnesium ion into protoporphyrin IX to yield Mg-protoporphyrin IX. The chain is Magnesium-chelatase subunit ChlI (chlI) from Pyropia yezoensis (Susabi-nori).